A 90-amino-acid polypeptide reads, in one-letter code: Probable Fe(2+)-trafficking protein (90 aa).

It belongs to the Fe(2+)-trafficking protein family.

In terms of biological role, could be a mediator in iron transactions between iron acquisition and iron-requiring processes, such as synthesis and/or repair of Fe-S clusters in biosynthetic enzymes. This is Probable Fe(2+)-trafficking protein from Laribacter hongkongensis (strain HLHK9).